The sequence spans 207 residues: ATP-dependent dethiobiotin synthetase BioD (207 aa).

ATP is bound at residue 11–16; it reads DVGKTF. Thr-15 lines the Mg(2+) pocket. The active site involves Lys-31. A substrate-binding site is contributed by Ser-35. ATP-binding positions include Asp-42, 95–98, and 155–156; these read ETSG and NQ. Mg(2+)-binding residues include Asp-42 and Glu-95.

This sequence belongs to the dethiobiotin synthetase family. In terms of assembly, homodimer. It depends on Mg(2+) as a cofactor.

The protein localises to the cytoplasm. The catalysed reaction is (7R,8S)-7,8-diammoniononanoate + CO2 + ATP = (4R,5S)-dethiobiotin + ADP + phosphate + 3 H(+). It functions in the pathway cofactor biosynthesis; biotin biosynthesis; biotin from 7,8-diaminononanoate: step 1/2. Catalyzes a mechanistically unusual reaction, the ATP-dependent insertion of CO2 between the N7 and N8 nitrogen atoms of 7,8-diaminopelargonic acid (DAPA, also called 7,8-diammoniononanoate) to form a ureido ring. This Chlamydia abortus (strain DSM 27085 / S26/3) (Chlamydophila abortus) protein is ATP-dependent dethiobiotin synthetase BioD.